Consider the following 577-residue polypeptide: Probable cytochrome c biosynthesis protein (577 aa).

The protein belongs to the CcmF/CycK/Ccl1/NrfE/CcsA family.

The protein localises to the mitochondrion. Could be involved in assembly and maturation of cytochromes c. May play a role in guidance of apocytochromes and heme groups for the covalent linkage introduced by the cytochrome-c-heme lyase. This is Probable cytochrome c biosynthesis protein from Oenothera berteroana (Bertero's evening primrose).